We begin with the raw amino-acid sequence, 228 residues long: Urease accessory protein UreG (228 aa).

34 to 41 (GPVGSGKT) lines the GTP pocket.

Belongs to the SIMIBI class G3E GTPase family. UreG subfamily. Homodimer. UreD, UreF and UreG form a complex that acts as a GTP-hydrolysis-dependent molecular chaperone, activating the urease apoprotein by helping to assemble the nickel containing metallocenter of UreC. The UreE protein probably delivers the nickel.

The protein resides in the cytoplasm. Facilitates the functional incorporation of the urease nickel metallocenter. This process requires GTP hydrolysis, probably effectuated by UreG. This Rhodococcus opacus (strain B4) protein is Urease accessory protein UreG.